We begin with the raw amino-acid sequence, 142 residues long: Ornithine decarboxylase antizyme (142 aa).

Low complexity predominate over residues M1–M19. Residues M1–P34 are disordered.

The protein belongs to the ODC antizyme family. As to quaternary structure, interacts with ODC1 and thereby sterically blocks ODC homodimerization.

Functionally, ornithine decarboxylase (ODC) antizyme protein that negatively regulates ODC activity and intracellular polyamine biosynthesis and uptake in response to increased intracellular polyamine levels. Binds to ODC monomers, inhibiting the assembly of the functional ODC homodimer, and targets the monomers for ubiquitin-independent proteolytic destruction by the 26S proteasome. This Pristionchus pacificus (Parasitic nematode) protein is Ornithine decarboxylase antizyme.